The chain runs to 381 residues: Cytochrome P450 105C1 (381 aa).

Cys330 serves as a coordination point for heme.

This sequence belongs to the cytochrome P450 family. The cofactor is heme.

It localises to the cytoplasm. This is Cytochrome P450 105C1 (cyp105C1) from Streptomyces sp.